The sequence spans 192 residues: Xanthine phosphoribosyltransferase (192 aa).

Leu20 and Asn27 together coordinate xanthine. 128-132 (ANGQA) contributes to the 5-phospho-alpha-D-ribose 1-diphosphate binding site. A xanthine-binding site is contributed by Lys156.

Belongs to the purine/pyrimidine phosphoribosyltransferase family. Xpt subfamily. In terms of assembly, homodimer.

It localises to the cytoplasm. The enzyme catalyses XMP + diphosphate = xanthine + 5-phospho-alpha-D-ribose 1-diphosphate. It participates in purine metabolism; XMP biosynthesis via salvage pathway; XMP from xanthine: step 1/1. Its function is as follows. Converts the preformed base xanthine, a product of nucleic acid breakdown, to xanthosine 5'-monophosphate (XMP), so it can be reused for RNA or DNA synthesis. This Listeria monocytogenes serotype 4b (strain CLIP80459) protein is Xanthine phosphoribosyltransferase.